Reading from the N-terminus, the 42-residue chain is Photosystem I reaction center subunit IX (42 aa).

Residues 7 to 27 traverse the membrane as a helical segment; sequence YLSVAPVLSTLWFGILAGLLI.

This sequence belongs to the PsaJ family.

Its subcellular location is the plastid. It localises to the chloroplast thylakoid membrane. May help in the organization of the PsaE and PsaF subunits. This Lemna minor (Common duckweed) protein is Photosystem I reaction center subunit IX.